The sequence spans 378 residues: UDP-N-acetylglucosamine 2-epimerase (378 aa).

The active site involves His-214.

The protein belongs to the UDP-N-acetylglucosamine 2-epimerase family.

It catalyses the reaction UDP-N-acetyl-alpha-D-glucosamine = UDP-N-acetyl-alpha-D-mannosamine. Its pathway is bacterial outer membrane biogenesis; LPS O-antigen biosynthesis. The sequence is that of UDP-N-acetylglucosamine 2-epimerase (rfbC) from Salmonella borreze.